Here is a 149-residue protein sequence, read N- to C-terminus: Protein-export protein SecB (149 aa).

The protein belongs to the SecB family. Homotetramer, a dimer of dimers. One homotetramer interacts with 1 SecA dimer.

It is found in the cytoplasm. One of the proteins required for the normal export of preproteins out of the cell cytoplasm. It is a molecular chaperone that binds to a subset of precursor proteins, maintaining them in a translocation-competent state. It also specifically binds to its receptor SecA. This chain is Protein-export protein SecB, found in Hydrogenovibrio crunogenus (strain DSM 25203 / XCL-2) (Thiomicrospira crunogena).